Consider the following 165-residue polypeptide: Fatty acid-binding protein homolog 3 (165 aa).

The first 19 residues, Met1 to Ala19, serve as a signal peptide directing secretion.

It belongs to the calycin superfamily. Fatty-acid binding protein (FABP) family. In terms of tissue distribution, expressed in presumptive hypodermal cells by the comma stage and in posterior body wall muscle cells by the two-fold stage. From L1 to adult stages, expression continues in body wall muscle cells adjacent to the pseudocoelom, while hypodermal expression is extinguished.

Its subcellular location is the secreted. May play a role in sequestering potentially toxic fatty acids and their peroxidation products, or it may be involved in the maintenance of the impermeable lipid layer of the eggshell. The polypeptide is Fatty acid-binding protein homolog 3 (lbp-3) (Caenorhabditis elegans).